The chain runs to 146 residues: Transcriptional regulator MraZ (146 aa).

2 SpoVT-AbrB domains span residues 6–49 and 78–121; these read TYDH…TEEE and THEV…DQKS.

Belongs to the MraZ family. As to quaternary structure, forms oligomers.

The protein localises to the cytoplasm. It localises to the nucleoid. The sequence is that of Transcriptional regulator MraZ from Mesoplasma florum (strain ATCC 33453 / NBRC 100688 / NCTC 11704 / L1) (Acholeplasma florum).